We begin with the raw amino-acid sequence, 348 residues long: Olfactory receptor 2T4 (348 aa).

Residues 1–57 lie on the Extracellular side of the membrane; the sequence is MDNITWMASHTGWSDFILMGLFRQSKHPMANITWMANHTGWSDFILLGLFRQSKHPA. N31 and N37 each carry an N-linked (GlcNAc...) asparagine glycan. Residues 58–81 traverse the membrane as a helical segment; the sequence is LLCVVIFVVFLMALSGNAVLILLI. Topologically, residues 82 to 89 are cytoplasmic; the sequence is HCDAHLHT. Residues 90 to 111 traverse the membrane as a helical segment; sequence PMYFFISQLSLMDMAYISVTVP. Residues 112-132 lie on the Extracellular side of the membrane; sequence KMLLDQVMGVNKISAPECGMQ. The cysteines at positions 129 and 221 are disulfide-linked. Residues 133-152 form a helical membrane-spanning segment; it reads MFFYVTLAGSEFFLLATMAY. Over 153–171 the chain is Cytoplasmic; the sequence is DRYVAICHPLRYPVLMNHR. The chain crosses the membrane as a helical span at residues 172-190; the sequence is VCLFLSSGCWFLGSVDGFT. Residues 191 to 227 are Extracellular-facing; the sequence is FTPITMTFPFRGSREIHHFFCEVPAVLNLSCSDTSLY. N218 is a glycosylation site (N-linked (GlcNAc...) asparagine). The chain crosses the membrane as a helical span at residues 228–251; sequence EIFMYLCCVLMLLIPVVIISSSYL. Residues 252 to 268 lie on the Cytoplasmic side of the membrane; it reads LILLTIHGMNSAEGRKK. The helical transmembrane segment at 269-291 threads the bilayer; it reads AFATCSSHLTVVILFYGAAIYTY. Over 292 to 304 the chain is Extracellular; the sequence is MLPSSYHTPEKDM. The chain crosses the membrane as a helical span at residues 305-324; that stretch reads MVSVFYTILTPVVNPLIYSL. Over 325-348 the chain is Cytoplasmic; sequence RNKDVMGALKKMLTVEPAFQKAME.

The protein belongs to the G-protein coupled receptor 1 family.

It is found in the cell membrane. In terms of biological role, odorant receptor. This chain is Olfactory receptor 2T4 (OR2T4), found in Homo sapiens (Human).